The sequence spans 231 residues: Large ribosomal subunit protein uL1 (231 aa).

It belongs to the universal ribosomal protein uL1 family. In terms of assembly, part of the 50S ribosomal subunit.

In terms of biological role, binds directly to 23S rRNA. The L1 stalk is quite mobile in the ribosome, and is involved in E site tRNA release. Functionally, protein L1 is also a translational repressor protein, it controls the translation of the L11 operon by binding to its mRNA. The polypeptide is Large ribosomal subunit protein uL1 (Pseudomonas putida (strain ATCC 700007 / DSM 6899 / JCM 31910 / BCRC 17059 / LMG 24140 / F1)).